Consider the following 163-residue polypeptide: Endoribonuclease YbeY (163 aa).

3 residues coordinate Zn(2+): histidine 119, histidine 123, and histidine 129.

Belongs to the endoribonuclease YbeY family. It depends on Zn(2+) as a cofactor.

The protein localises to the cytoplasm. In terms of biological role, single strand-specific metallo-endoribonuclease involved in late-stage 70S ribosome quality control and in maturation of the 3' terminus of the 16S rRNA. The sequence is that of Endoribonuclease YbeY from Actinobacillus pleuropneumoniae serotype 5b (strain L20).